Consider the following 318-residue polypeptide: 4-hydroxy-3-methylbut-2-enyl diphosphate reductase (318 aa).

Cys-12 contributes to the [4Fe-4S] cluster binding site. 2 residues coordinate (2E)-4-hydroxy-3-methylbut-2-enyl diphosphate: His-41 and His-74. Residues His-41 and His-74 each coordinate dimethylallyl diphosphate. Isopentenyl diphosphate-binding residues include His-41 and His-74. Cys-96 provides a ligand contact to [4Fe-4S] cluster. (2E)-4-hydroxy-3-methylbut-2-enyl diphosphate is bound at residue His-124. His-124 is a dimethylallyl diphosphate binding site. Isopentenyl diphosphate is bound at residue His-124. The Proton donor role is filled by Glu-126. Residue Thr-168 coordinates (2E)-4-hydroxy-3-methylbut-2-enyl diphosphate. Cys-198 serves as a coordination point for [4Fe-4S] cluster. Ser-226, Ser-227, Asn-228, and Ser-270 together coordinate (2E)-4-hydroxy-3-methylbut-2-enyl diphosphate. Ser-226, Ser-227, Asn-228, and Ser-270 together coordinate dimethylallyl diphosphate. Residues Ser-226, Ser-227, Asn-228, and Ser-270 each contribute to the isopentenyl diphosphate site.

The protein belongs to the IspH family. [4Fe-4S] cluster serves as cofactor.

The catalysed reaction is isopentenyl diphosphate + 2 oxidized [2Fe-2S]-[ferredoxin] + H2O = (2E)-4-hydroxy-3-methylbut-2-enyl diphosphate + 2 reduced [2Fe-2S]-[ferredoxin] + 2 H(+). It catalyses the reaction dimethylallyl diphosphate + 2 oxidized [2Fe-2S]-[ferredoxin] + H2O = (2E)-4-hydroxy-3-methylbut-2-enyl diphosphate + 2 reduced [2Fe-2S]-[ferredoxin] + 2 H(+). Its pathway is isoprenoid biosynthesis; dimethylallyl diphosphate biosynthesis; dimethylallyl diphosphate from (2E)-4-hydroxy-3-methylbutenyl diphosphate: step 1/1. The protein operates within isoprenoid biosynthesis; isopentenyl diphosphate biosynthesis via DXP pathway; isopentenyl diphosphate from 1-deoxy-D-xylulose 5-phosphate: step 6/6. Functionally, catalyzes the conversion of 1-hydroxy-2-methyl-2-(E)-butenyl 4-diphosphate (HMBPP) into a mixture of isopentenyl diphosphate (IPP) and dimethylallyl diphosphate (DMAPP). Acts in the terminal step of the DOXP/MEP pathway for isoprenoid precursor biosynthesis. The polypeptide is 4-hydroxy-3-methylbut-2-enyl diphosphate reductase (Psychrobacter sp. (strain PRwf-1)).